Here is a 415-residue protein sequence, read N- to C-terminus: MATH domain and coiled-coil domain-containing protein At2g42465 (415 aa).

One can recognise an MATH domain in the interval 6 to 130 (RKALTLTVTN…NDRFNIEIYI (125 aa)). Residues 244–341 (FKLEWLKAKL…LLKDTYSDLK (98 aa)) are a coiled coil.

In Arabidopsis thaliana (Mouse-ear cress), this protein is MATH domain and coiled-coil domain-containing protein At2g42465.